The primary structure comprises 419 residues: MLTAVVGLQFGDEGKGKFVDYLSGNINNIARFNGGANAGHCVQHGNLRGSFSQLPASLNKKNLYICQGALISLPILVKEIDFIKKEDIDSHIFIDPRCHIVLPLHAELNRASEKYKGKQKIGSVGVGVGACVEDKANRHGIRLIDTFDKEKLRSKLEFLWSIREKQINHVFNAQASLDFEEMLETTHQYGKRIEPYFTFTNEIIGDLLNSGEDVLLETSQATFLDNSFGTYPYTVAYQTLVQTCFAMIGIPAQKMHIVGVMKSYMIRVGNGPFPTELSTEQADYIRERGNEYGTVSKRPRRCGWLDLSLIKHAVKLNGVIELAITNVDVLAGLDEIKVAVAYEIDDKLVCCDNALLQLDRAKPIYKTFKSWSTLNSSYTDLTELPIELIDFLSFIQDYTGVPIKYISYGPDRNQTLVVK.

11 to 17 (GDEGKGK) serves as a coordination point for GTP. D12 acts as the Proton acceptor in catalysis. Mg(2+) is bound by residues D12 and G39. IMP-binding positions include 12–15 (DEGK), 37–40 (NAGH), R138, Q220, and R298. H40 (proton donor) is an active-site residue. 294-300 (TVSKRPR) is a binding site for substrate. GTP-binding positions include R300, 326-328 (NVD), and 407-409 (SYG).

This sequence belongs to the adenylosuccinate synthetase family. As to quaternary structure, homodimer. Mg(2+) serves as cofactor.

Its subcellular location is the cytoplasm. It carries out the reaction IMP + L-aspartate + GTP = N(6)-(1,2-dicarboxyethyl)-AMP + GDP + phosphate + 2 H(+). The protein operates within purine metabolism; AMP biosynthesis via de novo pathway; AMP from IMP: step 1/2. Plays an important role in the de novo pathway of purine nucleotide biosynthesis. Catalyzes the first committed step in the biosynthesis of AMP from IMP. This is Adenylosuccinate synthetase 1 from Photorhabdus laumondii subsp. laumondii (strain DSM 15139 / CIP 105565 / TT01) (Photorhabdus luminescens subsp. laumondii).